The chain runs to 511 residues: MFS-type transporper mpsC (511 aa).

Positions 1 to 35 (MTSSTESKHSNDESTDLEKQDAEESHGLPEERKQD) are enriched in basic and acidic residues. Residues 1–65 (MTSSTESKHS…PDDPANPMNW (65 aa)) form a disordered region. 7 helical membrane-spanning segments follow: residues 74–94 (VVMASLTTLFANITSTAFAPA), 108–128 (ITAALTVSIYLLGFAFGPLVI), 147–167 (ITVAFLIGCAQAKNLGMFLVF), 169–189 (LITGIAGSGPGTIGGGTIADV), 201–221 (AFAMGPLMGPVLGPLMSGFIA), 228–248 (WVFRVLCIATGVMTIVLYFVM), and 303–323 (PITLLLSLYCAFVFGLLILLF). A glycan (N-linked (GlcNAc...) asparagine) is linked at Asn337. A run of 5 helical transmembrane segments spans residues 342 to 362 (GLSYLGLGFGLAIGLVLFGML), 383 to 403 (LLLMVWFAPVIPGGFFWYGWT), 411 to 431 (ILPMMGTSLIGMGALMVMMPI), 443 to 465 (VAASALAANTLLRSLAGCFLPLA), and 476 to 496 (GWGNTLLGFIAIGFTCLPILF).

Belongs to the major facilitator superfamily.

The protein localises to the membrane. In terms of biological role, MFS-type transporper; part of the gene cluster that mediates the biosynthesis of macrophasetins, 3-decalinoyltetramic acids (DTAs) which feature a tetramate (pyrrolidine-2,4-dione) unit connected to a decalin fragment and that have potent bioactivities. Efflux pump that might be required for efficient secretion of macrophasetins. The chain is MFS-type transporper mpsC from Macrophomina phaseolina (strain MS6) (Charcoal rot fungus).